A 137-amino-acid chain; its full sequence is Large-conductance mechanosensitive channel (137 aa).

Helical transmembrane passes span 10–30 (FAMR…AAFG) and 76–96 (GVFI…FMAI).

Belongs to the MscL family. In terms of assembly, homopentamer.

Its subcellular location is the cell inner membrane. Functionally, channel that opens in response to stretch forces in the membrane lipid bilayer. May participate in the regulation of osmotic pressure changes within the cell. In Escherichia coli O45:K1 (strain S88 / ExPEC), this protein is Large-conductance mechanosensitive channel.